Here is a 243-residue protein sequence, read N- to C-terminus: Protein canopy homolog 3 (243 aa).

Positions 1-15 (MWFLFLLLPLWAGCA) are cleaved as a signal peptide. Residues 27-236 (SKCEVCKYVA…KEEKKQMDQP (210 aa)) form the Saposin B-type domain. 3 cysteine pairs are disulfide-bonded: cysteine 29–cysteine 188, cysteine 32–cysteine 176, and cysteine 86–cysteine 148. A coiled-coil region spans residues 136 to 160 (ETSAEVADMKKQCDVMMENYEEVIE). The disordered stretch occupies residues 186-243 (QSCLSEQGDSRKGDTGPSTGTKKQKKQGEKKNKSKKQNSGSKEEKKQMDQPMAAKEEL). Residues 226-243 (SKEEKKQMDQPMAAKEEL) show a composition bias toward basic and acidic residues.

Belongs to the canopy family.

The protein resides in the endoplasmic reticulum. Its function is as follows. Toll-like receptor (TLR)-specific co-chaperone for HSP90B1. Required for proper TLR folding and hence controls TLR exit from the endoplasmic reticulum. Consequently, required for immune responses. This chain is Protein canopy homolog 3 (cnpy3), found in Xenopus laevis (African clawed frog).